A 463-amino-acid polypeptide reads, in one-letter code: Adenosylhomocysteinase (463 aa).

Substrate-binding residues include Thr-54, Asp-128, and Glu-189. 190–192 (TTT) is an NAD(+) binding site. Lys-219 and Asp-223 together coordinate substrate. NAD(+) contacts are provided by residues Asn-224, 253–258 (GYGDVG), Glu-276, Asn-311, 332–334 (IGH), and Asn-377.

This sequence belongs to the adenosylhomocysteinase family. The cofactor is NAD(+).

The protein resides in the cytoplasm. It catalyses the reaction S-adenosyl-L-homocysteine + H2O = L-homocysteine + adenosine. Its pathway is amino-acid biosynthesis; L-homocysteine biosynthesis; L-homocysteine from S-adenosyl-L-homocysteine: step 1/1. Its function is as follows. May play a key role in the regulation of the intracellular concentration of adenosylhomocysteine. The chain is Adenosylhomocysteinase from Cereibacter sphaeroides (Rhodobacter sphaeroides).